The primary structure comprises 208 residues: MASYHQQQGGSTFMAIPTINFQMYSEIAGDDEWWEYIPCPFCYIEVEVHFLCDHLQEEHCFDMKNAVCPICADNLDKDTDEHFRVQHSHLLKRRKSSSFSCKPSSAAADKGSYEEDSYFEAPSHCMGRPAPDSSPDPLLSQFICCSLAPPVDSPRRSEADAEGHGSSSSDDQKRREQGVMDDASKEELEERLQRIEFVKQMLMTTIAY.

Residues 151 to 190 (VDSPRRSEADAEGHGSSSSDDQKRREQGVMDDASKEELEE) are disordered. Composition is skewed to basic and acidic residues over residues 153-163 (SPRRSEADAEG) and 170-190 (DDQK…ELEE).

The protein belongs to the Di19 family.

This is Protein DEHYDRATION-INDUCED 19 homolog 6 (DI19-6) from Oryza sativa subsp. japonica (Rice).